The sequence spans 88 residues: Putative septation protein SpoVG (88 aa).

This sequence belongs to the SpoVG family.

Its function is as follows. Could be involved in septation. This is Putative septation protein SpoVG from Lachnospira eligens (strain ATCC 27750 / DSM 3376 / VPI C15-48 / C15-B4) (Eubacterium eligens).